The primary structure comprises 451 residues: Penicillin-binding protein 4* (451 aa).

Serine 61 serves as the catalytic Acyl-ester intermediate.

Belongs to the beta-lactamase family.

It localises to the forespore outer membrane. It functions in the pathway cell wall biogenesis; peptidoglycan biosynthesis. Probably involved in peptidoglycan modification during cortex synthesis. This is Penicillin-binding protein 4* (pbpE) from Bacillus subtilis (strain 168).